The following is a 248-amino-acid chain: MLYNPLEQFTVNKIISLYTVYYSMSLTNSSLYFIIAAIISFFIFKYSANIPYVSLINKNNYSILTESLYKTILKMVKEQIGDKYTIYMPLIFSLFIIILVSNLVGLIPYGFSPTALFALPLGLSVTIIISVTVIGFVKYHLKYFSVLLPSGTPLGLVPLLLVVELLSYIARAFSLGIRLAANITSGHILLNIISGFLFKTSGIALLFVIIPFTLFIALTGLELIVAILQAYVWSILTCIYIKDSLILH.

Positions 1–3 are cleaved as a propeptide — removed in mature form; sequence MLY. A run of 7 helical transmembrane segments spans residues 24 to 44, 86 to 106, 117 to 137, 146 to 166, 183 to 203, 205 to 225, and 227 to 247; these read MSLT…FFIF, IYMP…LVGL, FALP…IGFV, VLLP…VELL, ITSG…TSGI, LLFV…ELIV, and ILQA…SLIL.

The protein belongs to the ATPase A chain family. In terms of assembly, F-type ATPases have 2 components, CF(1) - the catalytic core - and CF(0) - the membrane proton channel. CF(1) has five subunits: alpha(3), beta(3), gamma(1), delta(1), epsilon(1). CF(0) has three main subunits: a, b and c.

It localises to the mitochondrion inner membrane. Functionally, mitochondrial membrane ATP synthase (F(1)F(0) ATP synthase or Complex V) produces ATP from ADP in the presence of a proton gradient across the membrane which is generated by electron transport complexes of the respiratory chain. F-type ATPases consist of two structural domains, F(1) - containing the extramembraneous catalytic core and F(0) - containing the membrane proton channel, linked together by a central stalk and a peripheral stalk. During catalysis, ATP synthesis in the catalytic domain of F(1) is coupled via a rotary mechanism of the central stalk subunits to proton translocation. Key component of the proton channel; it may play a direct role in the translocation of protons across the membrane. In Zancudomyces culisetae (Gut fungus), this protein is ATP synthase subunit a.